The primary structure comprises 100 residues: Integration host factor subunit alpha 2 (100 aa).

Belongs to the bacterial histone-like protein family. Heterodimer of an alpha and a beta chain.

This protein is one of the two subunits of integration host factor, a specific DNA-binding protein that functions in genetic recombination as well as in transcriptional and translational control. The chain is Integration host factor subunit alpha 2 from Dechloromonas aromatica (strain RCB).